Consider the following 263-residue polypeptide: uncharacterized protein (263 aa).

12-19 (KGGVGKTT) serves as a coordination point for ATP.

The protein belongs to the ParA family. MinD subfamily.

This is an uncharacterized protein from Methanocaldococcus jannaschii (strain ATCC 43067 / DSM 2661 / JAL-1 / JCM 10045 / NBRC 100440) (Methanococcus jannaschii).